The chain runs to 98 residues: Aspartyl/glutamyl-tRNA(Asn/Gln) amidotransferase subunit C (98 aa).

Belongs to the GatC family. Heterotrimer of A, B and C subunits.

The enzyme catalyses L-glutamyl-tRNA(Gln) + L-glutamine + ATP + H2O = L-glutaminyl-tRNA(Gln) + L-glutamate + ADP + phosphate + H(+). It carries out the reaction L-aspartyl-tRNA(Asn) + L-glutamine + ATP + H2O = L-asparaginyl-tRNA(Asn) + L-glutamate + ADP + phosphate + 2 H(+). In terms of biological role, allows the formation of correctly charged Asn-tRNA(Asn) or Gln-tRNA(Gln) through the transamidation of misacylated Asp-tRNA(Asn) or Glu-tRNA(Gln) in organisms which lack either or both of asparaginyl-tRNA or glutaminyl-tRNA synthetases. The reaction takes place in the presence of glutamine and ATP through an activated phospho-Asp-tRNA(Asn) or phospho-Glu-tRNA(Gln). In Acidothermus cellulolyticus (strain ATCC 43068 / DSM 8971 / 11B), this protein is Aspartyl/glutamyl-tRNA(Asn/Gln) amidotransferase subunit C.